Here is a 208-residue protein sequence, read N- to C-terminus: High frequency lysogenization protein HflD homolog (208 aa).

It belongs to the HflD family.

The protein localises to the cytoplasm. Its subcellular location is the cell inner membrane. The chain is High frequency lysogenization protein HflD homolog from Pseudomonas entomophila (strain L48).